Reading from the N-terminus, the 101-residue chain is Small ribosomal subunit protein uS14 (101 aa).

The protein belongs to the universal ribosomal protein uS14 family. Part of the 30S ribosomal subunit. Contacts proteins S3 and S10.

Binds 16S rRNA, required for the assembly of 30S particles and may also be responsible for determining the conformation of the 16S rRNA at the A site. This is Small ribosomal subunit protein uS14 from Xylella fastidiosa (strain M23).